The primary structure comprises 694 residues: DNA-directed RNA polymerase subunit beta' (694 aa).

4 residues coordinate Zn(2+): cysteine 69, cysteine 71, cysteine 87, and cysteine 90. Residues aspartate 489, aspartate 491, and aspartate 493 each coordinate Mg(2+).

The protein belongs to the RNA polymerase beta' chain family. RpoC1 subfamily. As to quaternary structure, in plastids the minimal PEP RNA polymerase catalytic core is composed of four subunits: alpha, beta, beta', and beta''. When a (nuclear-encoded) sigma factor is associated with the core the holoenzyme is formed, which can initiate transcription. Mg(2+) serves as cofactor. The cofactor is Zn(2+).

It is found in the plastid. Its subcellular location is the chloroplast. It catalyses the reaction RNA(n) + a ribonucleoside 5'-triphosphate = RNA(n+1) + diphosphate. DNA-dependent RNA polymerase catalyzes the transcription of DNA into RNA using the four ribonucleoside triphosphates as substrates. In Gossypium barbadense (Sea Island cotton), this protein is DNA-directed RNA polymerase subunit beta'.